A 351-amino-acid chain; its full sequence is N-acetyl-gamma-glutamyl-phosphate reductase (351 aa).

Residue C150 is part of the active site.

It belongs to the NAGSA dehydrogenase family. Type 1 subfamily.

Its subcellular location is the cytoplasm. It carries out the reaction N-acetyl-L-glutamate 5-semialdehyde + phosphate + NADP(+) = N-acetyl-L-glutamyl 5-phosphate + NADPH + H(+). The protein operates within amino-acid biosynthesis; L-arginine biosynthesis; N(2)-acetyl-L-ornithine from L-glutamate: step 3/4. Its function is as follows. Catalyzes the NADPH-dependent reduction of N-acetyl-5-glutamyl phosphate to yield N-acetyl-L-glutamate 5-semialdehyde. The sequence is that of N-acetyl-gamma-glutamyl-phosphate reductase from Heliobacterium modesticaldum (strain ATCC 51547 / Ice1).